The following is a 179-amino-acid chain: Transthyretin-like protein 46 (179 aa).

Residues 1-17 form the signal peptide; it reads MNKLFVLLIALLGLTAA. A disordered region spans residues 144-179; sequence RRGGFNADYMDPDNSEKDQSKSSEESEDKEKTVETF. The span at 157–179 shows a compositional bias: basic and acidic residues; the sequence is NSEKDQSKSSEESEDKEKTVETF.

This sequence belongs to the nematode transthyretin-like family.

It localises to the secreted. The sequence is that of Transthyretin-like protein 46 (ttr-46) from Caenorhabditis elegans.